The following is a 413-amino-acid chain: Tyrosine--tRNA ligase (413 aa).

The short motif at 59–68 (PTAPDIHLGH) is the 'HIGH' region element. Positions 243–247 (KMSKS) match the 'KMSKS' region motif. Lys246 is an ATP binding site. The S4 RNA-binding domain maps to 351 to 411 (LAIGQLLKQA…GKRRFARVTL (61 aa)).

The protein belongs to the class-I aminoacyl-tRNA synthetase family. TyrS type 2 subfamily. As to quaternary structure, homodimer.

Its subcellular location is the cytoplasm. It carries out the reaction tRNA(Tyr) + L-tyrosine + ATP = L-tyrosyl-tRNA(Tyr) + AMP + diphosphate + H(+). Functionally, catalyzes the attachment of tyrosine to tRNA(Tyr) in a two-step reaction: tyrosine is first activated by ATP to form Tyr-AMP and then transferred to the acceptor end of tRNA(Tyr). The polypeptide is Tyrosine--tRNA ligase (Burkholderia thailandensis (strain ATCC 700388 / DSM 13276 / CCUG 48851 / CIP 106301 / E264)).